The chain runs to 312 residues: Cobalamin biosynthesis protein CobD (312 aa).

A run of 4 helical transmembrane segments spans residues 61 to 81 (IALL…LPLL), 83 to 103 (IIVP…AQHA), 152 to 172 (DAVF…AVLY), and 292 to 312 (GMWL…AIHA).

This sequence belongs to the CobD/CbiB family.

The protein localises to the cell membrane. The protein operates within cofactor biosynthesis; adenosylcobalamin biosynthesis. Its function is as follows. Converts cobyric acid to cobinamide by the addition of aminopropanol on the F carboxylic group. This is Cobalamin biosynthesis protein CobD from Chromobacterium violaceum (strain ATCC 12472 / DSM 30191 / JCM 1249 / CCUG 213 / NBRC 12614 / NCIMB 9131 / NCTC 9757 / MK).